A 1211-amino-acid chain; its full sequence is DNA-directed RNA polymerase subunit beta' (1211 aa).

Zn(2+) is bound by residues C60, C62, C75, and C78. Residues D450, D452, and D454 each contribute to the Mg(2+) site. Residues C819, C893, C900, and C903 each coordinate Zn(2+).

This sequence belongs to the RNA polymerase beta' chain family. In terms of assembly, the RNAP catalytic core consists of 2 alpha, 1 beta, 1 beta' and 1 omega subunit. When a sigma factor is associated with the core the holoenzyme is formed, which can initiate transcription. It depends on Mg(2+) as a cofactor. Zn(2+) serves as cofactor.

It catalyses the reaction RNA(n) + a ribonucleoside 5'-triphosphate = RNA(n+1) + diphosphate. Its function is as follows. DNA-dependent RNA polymerase catalyzes the transcription of DNA into RNA using the four ribonucleoside triphosphates as substrates. In Streptococcus equi subsp. equi (strain 4047), this protein is DNA-directed RNA polymerase subunit beta'.